We begin with the raw amino-acid sequence, 247 residues long: TLC domain-containing protein 1 (247 aa).

The first 35 residues, 1–35 (MPRLLHPALPLLLGATLTFRALRRALCRLPLPVHV), serve as a signal peptide directing secretion. At 36–46 (RADPLRTWRWH) the chain is on the extracellular side. The TLC domain maps to 40-234 (LRTWRWHNLL…LLRSDFCPEH (195 aa)). A helical transmembrane segment spans residues 47–67 (NLLVSFAHSIVSGIWALLCVW). At 68–83 (QTPDMLVEIETAWSLS) the chain is on the cytoplasmic side. Residues 84-104 (GYLLVCFSAGYFIHDTVDIVA) traverse the membrane as a helical segment. Over 105–123 (SGQTRASWEYLVHHVMAMG) the chain is Extracellular. The helical intramembrane region spans 124 to 144 (AFFSGIFWSSFVGGGVLTLLV). Residues 145-173 (EVSNIFLTIRMMMKISNAQDHLLYRVNKY) are Extracellular-facing. A helical membrane pass occupies residues 174 to 194 (VNLVMYFLFRLAPQAYLTHFF). The Cytoplasmic segment spans residues 195 to 201 (LRYVNQR). Residues 202 to 222 (TLGTFLLGILLMLDVMIIIYF) form a helical membrane-spanning segment. Residues 223–247 (SRLLRSDFCPEHVPKKQHKDKFLTE) are Extracellular-facing.

Its subcellular location is the cell membrane. Its function is as follows. Regulates the composition and fluidity of the plasma membrane. Inhibits the incorporation of membrane-fluidizing phospholipids containing omega-3 long-chain polyunsaturated fatty acids (LCPUFA) and thereby promotes membrane rigidity. Does not appear to have any effect on LCPUFA synthesis. This is TLC domain-containing protein 1 (TLCD1) from Homo sapiens (Human).